We begin with the raw amino-acid sequence, 310 residues long: tRNA dimethylallyltransferase (310 aa).

13-20 contributes to the ATP binding site; it reads GPTASGKT. Position 15–20 (15–20) interacts with substrate; the sequence is TASGKT. Interaction with substrate tRNA regions lie at residues 38 to 41, 162 to 166, 243 to 248, and 276 to 283; these read DSAL, QRLSR, RCVGYR, and KRQITWLR.

This sequence belongs to the IPP transferase family. Monomer. Mg(2+) is required as a cofactor.

The enzyme catalyses adenosine(37) in tRNA + dimethylallyl diphosphate = N(6)-dimethylallyladenosine(37) in tRNA + diphosphate. Its function is as follows. Catalyzes the transfer of a dimethylallyl group onto the adenine at position 37 in tRNAs that read codons beginning with uridine, leading to the formation of N6-(dimethylallyl)adenosine (i(6)A). The sequence is that of tRNA dimethylallyltransferase from Vibrio parahaemolyticus serotype O3:K6 (strain RIMD 2210633).